We begin with the raw amino-acid sequence, 275 residues long: MAIRIFAILFSIFSLATFAHAQEGTLERSDWRKFFSEFQAKGTIVVADERQADRAMLVFDPVRSKKRYSPASTFKIPHTLFALDAGAVRDEFQIFRWDGVNRGFAGHNQDQDLRSAMRNSTVWVYELFAKEIGDDKARRYLKKIDYGNAGPSTSNGDYWIEGSLAISAQEQIAFLRKLYRNELPFRVEHQRLVKDLMIVEAGRNWILRAKTGWEGRMGWWVGWVEWPTGSVFFALNIDTPNRMDDLFKREAIVRAILRSIEALPPNPAVNSDAAR.

The first 21 residues, 1–21, serve as a signal peptide directing secretion; it reads MAIRIFAILFSIFSLATFAHA. Serine 72 acts as the Acyl-ester intermediate in catalysis. Lysine 75 is modified (N6-carboxylysine). Position 210-212 (210-212) interacts with substrate; it reads KTG.

This sequence belongs to the class-D beta-lactamase family.

It carries out the reaction a beta-lactam + H2O = a substituted beta-amino acid. In terms of biological role, hydrolyzes oxacillin, first-generation cephalosporins and ceftazidime. Does not hydrolyze cefotaxime or carbapenems. This chain is Beta-lactamase OXA-15 (bla), found in Pseudomonas aeruginosa.